We begin with the raw amino-acid sequence, 292 residues long: Sulfofructosephosphate aldolase (292 aa).

Lys193 functions as the Schiff-base intermediate with substrate in the catalytic mechanism.

This sequence belongs to the aldolase LacD family. In terms of assembly, homotetramer.

It carries out the reaction 6-deoxy-6-sulfo-D-fructose 1-phosphate = (2S)-3-sulfolactaldehyde + dihydroxyacetone phosphate. Functionally, cleaves 6-deoxy-6-sulfo-D-fructose 1-phosphate (SFP) to form dihydroxyacetone phosphate (DHAP) and 3-sulfolactaldehyde (SLA). Can also catalyze the reverse reaction. The protein is Sulfofructosephosphate aldolase (yihT) of Salmonella typhimurium (strain LT2 / SGSC1412 / ATCC 700720).